The chain runs to 87 residues: Small ribosomal subunit protein bS20 (87 aa).

The segment at M1–R22 is disordered.

This sequence belongs to the bacterial ribosomal protein bS20 family.

Its function is as follows. Binds directly to 16S ribosomal RNA. The protein is Small ribosomal subunit protein bS20 of Pelobacter propionicus (strain DSM 2379 / NBRC 103807 / OttBd1).